The primary structure comprises 330 residues: Beta-ketoacyl-[acyl-carrier-protein] synthase III (330 aa).

Active-site residues include cysteine 115 and histidine 255. Residues 256-260 are ACP-binding; that stretch reads QANFR. Residue asparagine 285 is part of the active site.

The protein belongs to the thiolase-like superfamily. FabH family. Homodimer.

The protein resides in the cytoplasm. It carries out the reaction malonyl-[ACP] + acetyl-CoA + H(+) = 3-oxobutanoyl-[ACP] + CO2 + CoA. The protein operates within lipid metabolism; fatty acid biosynthesis. Catalyzes the condensation reaction of fatty acid synthesis by the addition to an acyl acceptor of two carbons from malonyl-ACP. Catalyzes the first condensation reaction which initiates fatty acid synthesis and may therefore play a role in governing the total rate of fatty acid production. Possesses both acetoacetyl-ACP synthase and acetyl transacylase activities. Its substrate specificity determines the biosynthesis of branched-chain and/or straight-chain of fatty acids. The chain is Beta-ketoacyl-[acyl-carrier-protein] synthase III from Helicobacter pylori (strain G27).